The sequence spans 510 residues: Glycerol kinase (510 aa).

ADP is bound at residue Thr-13. ATP contacts are provided by Thr-13 and Thr-14. A sn-glycerol 3-phosphate-binding site is contributed by Thr-13. An ADP-binding site is contributed by Arg-17. Sn-glycerol 3-phosphate contacts are provided by Arg-83, Glu-84, Tyr-135, and Asp-255. Glycerol-binding residues include Arg-83, Glu-84, Tyr-135, Asp-255, and Gln-256. ADP is bound by residues Thr-277, Gly-321, Gly-421, and Asn-425. ATP is bound by residues Thr-277, Gly-321, and Gly-421.

Belongs to the FGGY kinase family.

The enzyme catalyses glycerol + ATP = sn-glycerol 3-phosphate + ADP + H(+). It participates in polyol metabolism; glycerol degradation via glycerol kinase pathway; sn-glycerol 3-phosphate from glycerol: step 1/1. Its function is as follows. Key enzyme in the regulation of glycerol uptake and metabolism. Catalyzes the phosphorylation of glycerol to yield sn-glycerol 3-phosphate. The protein is Glycerol kinase of Haloquadratum walsbyi (strain DSM 16790 / HBSQ001).